The chain runs to 193 residues: Thioredoxin reductase-like selenoprotein T1b (193 aa).

A signal peptide spans 1–21 (METRCLYLLLVCVLSVNHATA). Residues 44–47 (CVSU) constitute a cross-link (cysteinyl-selenocysteine (Cys-Sec)). Position 47 (U47) is a non-standard amino acid, selenocysteine.

This sequence belongs to the SelWTH family. Selenoprotein T subfamily. In terms of processing, may contain a selenide-sulfide bond between Cys-44 and Sec-47. This bond is speculated to serve as redox-active pair. As to expression, widely expressed in the embryo. High level in embryonic blood at 24 hours post-fertilization (hpf).

Its subcellular location is the endoplasmic reticulum membrane. The enzyme catalyses [thioredoxin]-dithiol + NADP(+) = [thioredoxin]-disulfide + NADPH + H(+). In terms of biological role, selenoprotein with thioredoxin reductase-like oxidoreductase activity. The chain is Thioredoxin reductase-like selenoprotein T1b from Danio rerio (Zebrafish).